The chain runs to 388 residues: Glutamate 5-kinase (388 aa).

Lysine 21 is an ATP binding site. Residues serine 61, aspartate 148, and asparagine 160 each contribute to the substrate site. ATP-binding positions include 180 to 181 (TD) and 222 to 228 (TGGMITK). The region spanning 285–363 (RGSVFLDPGA…RWLARELGAE (79 aa)) is the PUA domain.

This sequence belongs to the glutamate 5-kinase family.

It localises to the cytoplasm. It carries out the reaction L-glutamate + ATP = L-glutamyl 5-phosphate + ADP. The protein operates within amino-acid biosynthesis; L-proline biosynthesis; L-glutamate 5-semialdehyde from L-glutamate: step 1/2. Its function is as follows. Catalyzes the transfer of a phosphate group to glutamate to form L-glutamate 5-phosphate. In Thermobifida fusca (strain YX), this protein is Glutamate 5-kinase.